Reading from the N-terminus, the 339-residue chain is Foldase protein PrsA (339 aa).

The N-terminal stretch at 1–26 (MKHLKNNTKKFTALLFALLFSMSIAG) is a signal peptide. C27 carries N-palmitoyl cysteine lipidation. Residue C27 is the site of S-diacylglycerol cysteine attachment. Positions 197–287 (KPTFHAQHVL…FGYHVIKLID (91 aa)) constitute a PpiC domain.

Belongs to the PrsA family.

The protein resides in the cell membrane. The catalysed reaction is [protein]-peptidylproline (omega=180) = [protein]-peptidylproline (omega=0). Plays a major role in protein secretion by helping the post-translocational extracellular folding of several secreted proteins. This Clostridium tetani (strain Massachusetts / E88) protein is Foldase protein PrsA.